The chain runs to 423 residues: Large ribosomal subunit protein mL37 (423 aa).

The N-terminal 29 residues, 1–29, are a transit peptide targeting the mitochondrion; it reads MALASGPARRALAGSGQLGLGGFGAPRRG.

It belongs to the mitochondrion-specific ribosomal protein mL37 family. As to quaternary structure, component of the mitochondrial large ribosomal subunit (mt-LSU). Mature mammalian 55S mitochondrial ribosomes consist of a small (28S) and a large (39S) subunit. The 28S small subunit contains a 12S ribosomal RNA (12S mt-rRNA) and 30 different proteins. The 39S large subunit contains a 16S rRNA (16S mt-rRNA), a copy of mitochondrial valine transfer RNA (mt-tRNA(Val)), which plays an integral structural role, and 52 different proteins. mL37 forms a heterodimer with mL65.

The protein localises to the mitochondrion. This is Large ribosomal subunit protein mL37 (MRPL37) from Homo sapiens (Human).